Reading from the N-terminus, the 434-residue chain is UDP-N-acetylglucosamine 1-carboxyvinyltransferase (434 aa).

Position 34 to 35 (34 to 35) interacts with phosphoenolpyruvate; it reads KN. Arginine 104 is a UDP-N-acetyl-alpha-D-glucosamine binding site. Cysteine 128 acts as the Proton donor in catalysis. Position 128 is a 2-(S-cysteinyl)pyruvic acid O-phosphothioketal (cysteine 128). UDP-N-acetyl-alpha-D-glucosamine-binding residues include aspartate 319 and isoleucine 341.

This sequence belongs to the EPSP synthase family. MurA subfamily.

Its subcellular location is the cytoplasm. The catalysed reaction is phosphoenolpyruvate + UDP-N-acetyl-alpha-D-glucosamine = UDP-N-acetyl-3-O-(1-carboxyvinyl)-alpha-D-glucosamine + phosphate. It participates in cell wall biogenesis; peptidoglycan biosynthesis. Its function is as follows. Cell wall formation. Adds enolpyruvyl to UDP-N-acetylglucosamine. The protein is UDP-N-acetylglucosamine 1-carboxyvinyltransferase of Prochlorococcus marinus (strain MIT 9313).